Reading from the N-terminus, the 435-residue chain is Adenylosuccinate synthetase (435 aa).

GTP-binding positions include 12–18 and 40–42; these read GDEGKGK and GHT. D13 functions as the Proton acceptor in the catalytic mechanism. Mg(2+) contacts are provided by D13 and G40. IMP is bound by residues 13–16, 38–41, T130, R144, Q224, T239, and R301; these read DEGK and NAGH. H41 (proton donor) is an active-site residue. 297–303 is a substrate binding site; that stretch reads TVSNRKR. GTP contacts are provided by residues R303, 329–331, and 411–413; these read KLD and SAG.

This sequence belongs to the adenylosuccinate synthetase family. Homodimer. The cofactor is Mg(2+).

Its subcellular location is the cytoplasm. The catalysed reaction is IMP + L-aspartate + GTP = N(6)-(1,2-dicarboxyethyl)-AMP + GDP + phosphate + 2 H(+). Its pathway is purine metabolism; AMP biosynthesis via de novo pathway; AMP from IMP: step 1/2. Its function is as follows. Plays an important role in the de novo pathway of purine nucleotide biosynthesis. Catalyzes the first committed step in the biosynthesis of AMP from IMP. The chain is Adenylosuccinate synthetase from Wolbachia sp. subsp. Brugia malayi (strain TRS).